We begin with the raw amino-acid sequence, 226 residues long: Beta-casein (226 aa).

Residues 1–51 (REKEELNVSSETVESLSSNEPDSSSEESITHINKEKSQKFKHEGQQQREVE) form a disordered region. Position 9 is a phosphoserine (Ser-9). A Phosphothreonine modification is found at Thr-12. Ser-15, Ser-17, Ser-18, and Ser-25 each carry phosphoserine. The segment covering 28 to 51 (SITHINKEKSQKFKHEGQQQREVE) has biased composition (basic and acidic residues).

It belongs to the beta-casein family. There are at least three different forms found in milk, with varying degrees of phosphorylation. These include form 5-P which is phosphorylated at three sites, this form is present in low amounts, form 6-P which is phosphorylated at six sites, and form 7-P which is phosphorylated at seven sites. As to expression, mammary gland specific. Secreted in milk.

Its subcellular location is the secreted. Important role in determination of the surface properties of the casein micelles. The polypeptide is Beta-casein (Equus asinus (Donkey)).